We begin with the raw amino-acid sequence, 129 residues long: D-ribose pyranase (129 aa).

The Proton donor role is filled by His20. Substrate is bound by residues Asp28, His96, and 118-120 (YAN).

It belongs to the RbsD / FucU family. RbsD subfamily. As to quaternary structure, homodecamer.

It localises to the cytoplasm. The catalysed reaction is beta-D-ribopyranose = beta-D-ribofuranose. Its pathway is carbohydrate metabolism; D-ribose degradation; D-ribose 5-phosphate from beta-D-ribopyranose: step 1/2. Functionally, catalyzes the interconversion of beta-pyran and beta-furan forms of D-ribose. In Halalkalibacterium halodurans (strain ATCC BAA-125 / DSM 18197 / FERM 7344 / JCM 9153 / C-125) (Bacillus halodurans), this protein is D-ribose pyranase.